Here is a 159-residue protein sequence, read N- to C-terminus: Endoribonuclease YbeY (159 aa).

H114, H118, and H124 together coordinate Zn(2+).

The protein belongs to the endoribonuclease YbeY family. It depends on Zn(2+) as a cofactor.

The protein localises to the cytoplasm. Functionally, single strand-specific metallo-endoribonuclease involved in late-stage 70S ribosome quality control and in maturation of the 3' terminus of the 16S rRNA. The polypeptide is Endoribonuclease YbeY (Pectobacterium atrosepticum (strain SCRI 1043 / ATCC BAA-672) (Erwinia carotovora subsp. atroseptica)).